Here is a 209-residue protein sequence, read N- to C-terminus: MCDMYSDFILGSSSKCRSQLLEVLGFFPKRSIGPEIDESPKKGELPLTYAKRMAYEKALKLKRVCHEENVITADTVASCGRRILPKACCDEDVRYCLEFLSGRRHRLYTSLCLVTKSGEVRQRTVMTVLKFKRLSNEEIEFYLATKEGIGKAGGYSIQGMAQGFVLFIRGSYFNVVGLPAYEVISLLRSVGVFQQSREALYSQGVKDAK.

D74 acts as the Proton acceptor in catalysis.

It belongs to the Maf family. A divalent metal cation is required as a cofactor.

The protein resides in the cytoplasm. It catalyses the reaction a ribonucleoside 5'-triphosphate + H2O = a ribonucleoside 5'-phosphate + diphosphate + H(+). The catalysed reaction is a 2'-deoxyribonucleoside 5'-triphosphate + H2O = a 2'-deoxyribonucleoside 5'-phosphate + diphosphate + H(+). Nucleoside triphosphate pyrophosphatase. May have a dual role in cell division arrest and in preventing the incorporation of modified nucleotides into cellular nucleic acids. The protein is Nucleoside triphosphate pyrophosphatase of Neorickettsia sennetsu (strain ATCC VR-367 / Miyayama) (Ehrlichia sennetsu).